A 271-amino-acid polypeptide reads, in one-letter code: MKI67 FHA domain-interacting nucleolar phosphoprotein (271 aa).

The segment at Met-1–Ser-20 is disordered. N-acetylalanine is present on Ala-2. Lys-37 participates in a covalent cross-link: Glycyl lysine isopeptide (Lys-Gly) (interchain with G-Cter in SUMO2). An RRM domain is found at Gly-44–Arg-122. Arg-113 is subject to Omega-N-methylarginine. Glycyl lysine isopeptide (Lys-Gly) (interchain with G-Cter in SUMO2) cross-links involve residues Lys-178 and Lys-191. Residues Thr-213 and Thr-217 each carry the phosphothreonine modification. Arg-223 and Arg-224 each carry omega-N-methylated arginine. Ser-226 bears the Phosphoserine mark. Residues Pro-242 to Gln-271 are disordered. Residue Lys-247 forms a Glycyl lysine isopeptide (Lys-Gly) (interchain with G-Cter in SUMO1); alternate linkage. Lys-247 participates in a covalent cross-link: Glycyl lysine isopeptide (Lys-Gly) (interchain with G-Cter in SUMO2); alternate. Basic residues predominate over residues Lys-261–Gln-271.

In terms of assembly, binds to the FHA domain of MKI67; this interaction is enhanced in mitosis. Phosphorylated.

It is found in the nucleus. The protein localises to the nucleolus. The protein resides in the chromosome. This chain is MKI67 FHA domain-interacting nucleolar phosphoprotein (Nifk), found in Rattus norvegicus (Rat).